A 716-amino-acid polypeptide reads, in one-letter code: Polyribonucleotide nucleotidyltransferase (716 aa).

Mg(2+) contacts are provided by D485 and D491. Residues 552–611 enclose the KH domain; that stretch reads PKITTISVPKEKIRDVIGSGGKVIREIVEYSGAKVDIGDDGTVTIAASNDEQAQKAIARI. In terms of domain architecture, S1 motif spans 621–689; it reads GRIYEGKVVK…DRGKVKLSMR (69 aa).

Belongs to the polyribonucleotide nucleotidyltransferase family. The cofactor is Mg(2+).

It localises to the cytoplasm. It catalyses the reaction RNA(n+1) + phosphate = RNA(n) + a ribonucleoside 5'-diphosphate. Functionally, involved in mRNA degradation. Catalyzes the phosphorolysis of single-stranded polyribonucleotides processively in the 3'- to 5'-direction. The sequence is that of Polyribonucleotide nucleotidyltransferase from Gluconobacter oxydans (strain 621H) (Gluconobacter suboxydans).